Consider the following 70-residue polypeptide: NADH dehydrogenase [ubiquinone] 1 alpha subcomplex subunit 1 (70 aa).

The helical transmembrane segment at 1-21 (MWFEVLPGIAVMGVCLFIPGM) threads the bilayer.

This sequence belongs to the complex I NDUFA1 subunit family. As to quaternary structure, complex I is composed of 45 different subunits.

The protein resides in the mitochondrion inner membrane. In terms of biological role, accessory subunit of the mitochondrial membrane respiratory chain NADH dehydrogenase (Complex I), that is believed not to be involved in catalysis. Complex I functions in the transfer of electrons from NADH to the respiratory chain. The immediate electron acceptor for the enzyme is believed to be ubiquinone. This is NADH dehydrogenase [ubiquinone] 1 alpha subcomplex subunit 1 (NDUFA1) from Bos taurus (Bovine).